The primary structure comprises 279 residues: 2-dehydro-3-deoxyphosphooctonate aldolase (279 aa).

The protein belongs to the KdsA family.

It is found in the cytoplasm. The enzyme catalyses D-arabinose 5-phosphate + phosphoenolpyruvate + H2O = 3-deoxy-alpha-D-manno-2-octulosonate-8-phosphate + phosphate. The protein operates within carbohydrate biosynthesis; 3-deoxy-D-manno-octulosonate biosynthesis; 3-deoxy-D-manno-octulosonate from D-ribulose 5-phosphate: step 2/3. It participates in bacterial outer membrane biogenesis; lipopolysaccharide biosynthesis. This chain is 2-dehydro-3-deoxyphosphooctonate aldolase, found in Methylobacillus flagellatus (strain ATCC 51484 / DSM 6875 / VKM B-1610 / KT).